The chain runs to 317 residues: Xylose/arabinose import permease protein XacH (317 aa).

Helical transmembrane passes span 40-60, 98-118, 132-152, 179-199, 241-261, and 290-310; these read GIPF…NFAI, LVLL…LAIL, VYLL…LWMF, IALG…TMVV, AAVV…ALVG, and AAIA…YLYY. Positions 94 to 309 constitute an ABC transmembrane type-1 domain; it reads AQNNLVLLVG…ALGVIGPYLY (216 aa).

It belongs to the binding-protein-dependent transport system permease family. The complex is composed of two ATP-binding proteins (XacJ and XacK), two transmembrane proteins (XacH and XacI) and a solute-binding protein (XacG).

The protein localises to the cell membrane. Its function is as follows. Part of the ABC transporter complex XacGHIJK involved in the uptake of xylose and arabinose. Responsible for the translocation of the substrate across the membrane. The polypeptide is Xylose/arabinose import permease protein XacH (Haloferax volcanii (strain ATCC 29605 / DSM 3757 / JCM 8879 / NBRC 14742 / NCIMB 2012 / VKM B-1768 / DS2) (Halobacterium volcanii)).